Consider the following 157-residue polypeptide: Small ribosomal subunit protein uS7 (157 aa).

This sequence belongs to the universal ribosomal protein uS7 family. Part of the 30S ribosomal subunit. Contacts proteins S9 and S11.

Its function is as follows. One of the primary rRNA binding proteins, it binds directly to 16S rRNA where it nucleates assembly of the head domain of the 30S subunit. Is located at the subunit interface close to the decoding center, probably blocks exit of the E-site tRNA. The chain is Small ribosomal subunit protein uS7 from Chloroflexus aurantiacus (strain ATCC 29366 / DSM 635 / J-10-fl).